We begin with the raw amino-acid sequence, 284 residues long: 4-diphosphocytidyl-2-C-methyl-D-erythritol kinase (284 aa).

The active site involves K14. Position 98 to 108 (98 to 108 (PMGGGLGGGSS)) interacts with ATP. The active site involves D140.

It belongs to the GHMP kinase family. IspE subfamily.

It catalyses the reaction 4-CDP-2-C-methyl-D-erythritol + ATP = 4-CDP-2-C-methyl-D-erythritol 2-phosphate + ADP + H(+). It participates in isoprenoid biosynthesis; isopentenyl diphosphate biosynthesis via DXP pathway; isopentenyl diphosphate from 1-deoxy-D-xylulose 5-phosphate: step 3/6. Catalyzes the phosphorylation of the position 2 hydroxy group of 4-diphosphocytidyl-2C-methyl-D-erythritol. The sequence is that of 4-diphosphocytidyl-2-C-methyl-D-erythritol kinase from Shewanella putrefaciens (strain CN-32 / ATCC BAA-453).